A 303-amino-acid polypeptide reads, in one-letter code: Taste receptor type 2 member 2 (303 aa).

Topologically, residues 1 to 10 (MALSFSAILH) are extracellular. Residues 11 to 31 (IIMMSAEFFTGITVNGFLIIV) traverse the membrane as a helical segment. Topologically, residues 32-56 (NCNELIKHRKLMPIQILLMCIGMSR) are cytoplasmic. The chain crosses the membrane as a helical span at residues 57 to 77 (FGLQMVLMVQSFFSVFFPLLY). Residues 78 to 79 (VK) are Extracellular-facing. Residues 80–100 (IIYGAAMMFLWMFFSSISLWF) form a helical membrane-spanning segment. Residues 101–102 (AT) lie on the Cytoplasmic side of the membrane. The helical transmembrane segment at 103-123 (CLSVFYCLKISGFTQSCFLWL) threads the bilayer. Over 124–129 (KFRIPK) the chain is Extracellular. The chain crosses the membrane as a helical span at residues 130-150 (LIPWLLLGSVLASVSIASVCI). Topologically, residues 151–185 (EVDYAKNVEEDALRNTTLKKSKTKIKKISEVLLVN) are cytoplasmic. A helical membrane pass occupies residues 186–206 (LALIFPLAIFVMCTSMLLISL). At 207–234 (YKHTHRMQHGSHGFRNANTEAHINALKT) the chain is on the extracellular side. Residues 235–255 (VITFFCFFISYFAAFMTNMTF) form a helical membrane-spanning segment. Over 256 to 277 (SLPYRSHQFFMLKDIMAAYPSG) the chain is Cytoplasmic.

The protein belongs to the G-protein coupled receptor T2R family.

The protein resides in the cell membrane. Functionally, bitter taste receptor that detects natural and synthetic bitter compounds. This chain is Taste receptor type 2 member 2, found in Homo sapiens (Human).